Consider the following 127-residue polypeptide: Large ribosomal subunit protein bL17 (127 aa).

It belongs to the bacterial ribosomal protein bL17 family. Part of the 50S ribosomal subunit. Contacts protein L32.

In Stenotrophomonas maltophilia (strain K279a), this protein is Large ribosomal subunit protein bL17.